The chain runs to 60 residues: Conotoxin Cal6.20 (60 aa).

The signal sequence occupies residues 1–22; sequence MKLTCVLIVAVLILTACQVIAA. Cystine bridges form between cysteine 32/cysteine 42, cysteine 35/cysteine 48, and cysteine 41/cysteine 55.

Belongs to the conotoxin O1 superfamily. Expressed by the venom duct.

Its subcellular location is the secreted. Functionally, probable neurotoxin. The polypeptide is Conotoxin Cal6.20 (Californiconus californicus (California cone)).